The primary structure comprises 229 residues: Transmembrane emp24 domain-containing protein 5 (229 aa).

The signal sequence occupies residues 1–27 (MGGRMWLPFPVLLLSALPAALLRGAAG). The Lumenal portion of the chain corresponds to 28 to 196 (FTPSLDSDFT…IQESNFDRVN (169 aa)). Residues 45–126 (KECFYQPMPL…EKVIFFELIL (82 aa)) form the GOLD domain. Residues 197–217 (FWSVVNLMVMVVVSAIQVYTL) traverse the membrane as a helical segment. Topologically, residues 218 to 229 (KSLFEDKRKSRT) are cytoplasmic.

The protein belongs to the EMP24/GP25L family. As to quaternary structure, interacts with TMED9 and TMED10.

It is found in the endoplasmic reticulum membrane. The protein resides in the golgi apparatus. Its subcellular location is the cis-Golgi network membrane. The protein localises to the endoplasmic reticulum-Golgi intermediate compartment membrane. Its function is as follows. Potential role in vesicular protein trafficking, mainly in the early secretory pathway. Required for the maintenance of the Golgi apparatus; involved in protein exchange between Golgi stacks during assembly. Probably not required for COPI-vesicle-mediated retrograde transport. This is Transmembrane emp24 domain-containing protein 5 (Tmed5) from Mus musculus (Mouse).